A 310-amino-acid chain; its full sequence is 4-diphosphocytidyl-2-C-methyl-D-erythritol kinase (310 aa).

Lysine 10 is an active-site residue. 102-112 (PVAGGMAGGSA) provides a ligand contact to ATP. The active site involves aspartate 144. The disordered stretch occupies residues 289-310 (TRTARGPAAGAQLLPGPVGSFA).

It belongs to the GHMP kinase family. IspE subfamily.

The enzyme catalyses 4-CDP-2-C-methyl-D-erythritol + ATP = 4-CDP-2-C-methyl-D-erythritol 2-phosphate + ADP + H(+). Its pathway is isoprenoid biosynthesis; isopentenyl diphosphate biosynthesis via DXP pathway; isopentenyl diphosphate from 1-deoxy-D-xylulose 5-phosphate: step 3/6. Catalyzes the phosphorylation of the position 2 hydroxy group of 4-diphosphocytidyl-2C-methyl-D-erythritol. In Cutibacterium acnes (strain DSM 16379 / KPA171202) (Propionibacterium acnes), this protein is 4-diphosphocytidyl-2-C-methyl-D-erythritol kinase.